The chain runs to 296 residues: dTDP-4-dehydrorhamnose reductase (296 aa).

NADH is bound by residues 10–12, 35–36, and 59–61; these read GQI, DL, and AYT. NADPH contacts are provided by residues 11 to 12, 35 to 36, and 59 to 61; these read QI, DL, and AYT. 100 to 101 contributes to the dTDP-beta-L-rhamnose binding site; sequence TD. Residues tyrosine 124 and lysine 128 each contribute to the NADH site. Positions 124 and 128 each coordinate NADPH. The active-site Proton donor/acceptor is the tyrosine 124. Tryptophan 149 lines the dTDP-beta-L-rhamnose pocket.

The protein belongs to the dTDP-4-dehydrorhamnose reductase family. As to quaternary structure, homodimer. The cofactor is Mg(2+).

It catalyses the reaction dTDP-beta-L-rhamnose + NADP(+) = dTDP-4-dehydro-beta-L-rhamnose + NADPH + H(+). Its pathway is carbohydrate biosynthesis; dTDP-L-rhamnose biosynthesis. In terms of biological role, involved in the biosynthesis of the dTDP-L-rhamnose which is an important component of lipopolysaccharide (LPS). Catalyzes the reduction of dTDP-6-deoxy-L-lyxo-4-hexulose to yield dTDP-L-rhamnose. RmlD uses NADH and NADPH nearly equally well. In Sinorhizobium fredii (strain NBRC 101917 / NGR234), this protein is dTDP-4-dehydrorhamnose reductase.